The following is a 475-amino-acid chain: Protein nucleotidyltransferase YdiU (475 aa).

The ATP site is built by glycine 82, glycine 84, arginine 85, lysine 105, aspartate 117, glycine 118, arginine 168, and arginine 175. Aspartate 240 functions as the Proton acceptor in the catalytic mechanism. The Mg(2+) site is built by asparagine 241 and aspartate 250. An ATP-binding site is contributed by aspartate 250.

This sequence belongs to the SELO family. Requires Mg(2+) as cofactor. It depends on Mn(2+) as a cofactor.

It catalyses the reaction L-seryl-[protein] + ATP = 3-O-(5'-adenylyl)-L-seryl-[protein] + diphosphate. It carries out the reaction L-threonyl-[protein] + ATP = 3-O-(5'-adenylyl)-L-threonyl-[protein] + diphosphate. The enzyme catalyses L-tyrosyl-[protein] + ATP = O-(5'-adenylyl)-L-tyrosyl-[protein] + diphosphate. The catalysed reaction is L-histidyl-[protein] + UTP = N(tele)-(5'-uridylyl)-L-histidyl-[protein] + diphosphate. It catalyses the reaction L-seryl-[protein] + UTP = O-(5'-uridylyl)-L-seryl-[protein] + diphosphate. It carries out the reaction L-tyrosyl-[protein] + UTP = O-(5'-uridylyl)-L-tyrosyl-[protein] + diphosphate. In terms of biological role, nucleotidyltransferase involved in the post-translational modification of proteins. It can catalyze the addition of adenosine monophosphate (AMP) or uridine monophosphate (UMP) to a protein, resulting in modifications known as AMPylation and UMPylation. In Aeromonas salmonicida (strain A449), this protein is Protein nucleotidyltransferase YdiU.